A 450-amino-acid polypeptide reads, in one-letter code: Probable transporter MCH1 (450 aa).

The next 12 membrane-spanning stretches (helical) occupy residues 32–52 (AFLV…ISLY), 69–89 (VLFS…GLLS), 96–116 (MLSW…AWVF), 127–147 (VLCF…ALFT), 157–177 (LCSI…GSQL), 199–219 (LAVA…IVTM), 255–275 (PAAY…EMFL), 290–309 (VLPE…GLII), 320–340 (MSVQ…VVLA), 355–375 (LSGA…LAVW), 378–398 (AVFG…SILF), and 423–443 (VFWS…LMYL).

The protein belongs to the major facilitator superfamily.

It localises to the vacuole membrane. Functionally, probable transporter. The chain is Probable transporter MCH1 (MCH1) from Eremothecium gossypii (strain ATCC 10895 / CBS 109.51 / FGSC 9923 / NRRL Y-1056) (Yeast).